Consider the following 217-residue polypeptide: Segregation and condensation protein B (217 aa).

This sequence belongs to the ScpB family. Homodimer. Homodimerization may be required to stabilize the binding of ScpA to the Smc head domains. Component of a cohesin-like complex composed of ScpA, ScpB and the Smc homodimer, in which ScpA and ScpB bind to the head domain of Smc. The presence of the three proteins is required for the association of the complex with DNA.

It localises to the cytoplasm. Its function is as follows. Participates in chromosomal partition during cell division. May act via the formation of a condensin-like complex containing Smc and ScpA that pull DNA away from mid-cell into both cell halves. This Geobacillus kaustophilus (strain HTA426) protein is Segregation and condensation protein B.